Consider the following 481-residue polypeptide: ATP synthase subunit beta, plastid (481 aa).

Glycine 162 to threonine 169 contacts ATP.

The protein belongs to the ATPase alpha/beta chains family. In terms of assembly, F-type ATPases have 2 components, CF(1) - the catalytic core - and CF(0) - the membrane proton channel. CF(1) has five subunits: alpha(3), beta(3), gamma(1), delta(1), epsilon(1). CF(0) has four main subunits: a(1), b(1), b'(1) and c(9-12).

Its subcellular location is the plastid membrane. The enzyme catalyses ATP + H2O + 4 H(+)(in) = ADP + phosphate + 5 H(+)(out). Functionally, produces ATP from ADP in the presence of a proton gradient across the membrane. The catalytic sites are hosted primarily by the beta subunits. This chain is ATP synthase subunit beta, plastid (atpB), found in Prototheca wickerhamii.